The following is a 133-amino-acid chain: U-scoloptoxin(11)-Sm1a (133 aa).

The first 19 residues, 1–19 (MIWFLAFILFLAAGELVSS), serve as a signal peptide directing secretion.

This sequence belongs to the scoloptoxin-11 family. In terms of processing, contains 10 disulfide bonds. In terms of tissue distribution, expressed by the venom gland.

It localises to the secreted. The protein is U-scoloptoxin(11)-Sm1a of Scolopendra morsitans (Tanzanian blue ringleg centipede).